A 358-amino-acid chain; its full sequence is Malate dehydrogenase 2, glyoxysomal (358 aa).

A glyoxysome-targeting transit peptide spans 1-38; sequence MEFRGDANKRIAMISAHLQPSFTPQMEAKNSVMGRENC. NAD(+)-binding positions include 53–59 and D79; that span reads GAAGGIG. Substrate-binding residues include R126 and R132. NAD(+)-binding positions include N139 and 162–164; that span reads ISN. The substrate site is built by N164 and R198. H222 acts as the Proton acceptor in catalysis. M273 serves as a coordination point for NAD(+).

Belongs to the LDH/MDH superfamily. MDH type 1 family. As to quaternary structure, homodimer.

It localises to the glyoxysome. The catalysed reaction is (S)-malate + NAD(+) = oxaloacetate + NADH + H(+). This is Malate dehydrogenase 2, glyoxysomal (MDH2) from Brassica napus (Rape).